Consider the following 323-residue polypeptide: MPSLKSIRKRISSVKSTQKITRAMKMVAGAKLNKAQLRITELRPYAVKVQEVLSAITRDAAPAAEALAAEGIGAEGEAGAPAGGEKALHPLLVTRPERRVLLVVLTSDRGLCGAFNTNINKRAEREWKSRTEAGQEVQLAIIGRKGRDYFNRRGAPILEYLAGVWDKLNLETAQAVGAKLLAPFNKGEIDAIYLVYNEFKSAITQTVVVERLLPPAGGPAKEQEQGDEGGHGAPSAASEFLYEPDKGALLERLVPMYVDISILRALYESMASELGAKLTAMDAANKNAKEVIDNLTLEYNKARQAAITKELMEIIGGSEALKE.

Positions 215-237 (PAGGPAKEQEQGDEGGHGAPSAA) are disordered. Positions 221–230 (KEQEQGDEGG) are enriched in basic and acidic residues.

The protein belongs to the ATPase gamma chain family. In terms of assembly, F-type ATPases have 2 components, CF(1) - the catalytic core - and CF(0) - the membrane proton channel. CF(1) has five subunits: alpha(3), beta(3), gamma(1), delta(1), epsilon(1). CF(0) has three main subunits: a, b and c.

The protein resides in the cell inner membrane. In terms of biological role, produces ATP from ADP in the presence of a proton gradient across the membrane. The gamma chain is believed to be important in regulating ATPase activity and the flow of protons through the CF(0) complex. The chain is ATP synthase gamma chain from Sorangium cellulosum (strain So ce56) (Polyangium cellulosum (strain So ce56)).